A 215-amino-acid polypeptide reads, in one-letter code: MGRGKIEIKRIENSSNRQVTYSKRRNGIMKKAKEISVLCDAHVSVIIFASSGKMHEFCSPSTTLVDMLDHYHKLSGKRLWDPKHEHLDNEINRVKKENDSMQIELRHLKGEDITTLNYKELMVLEDALENGTSALKNKQMEFVRMMRKHNEMVEEENQSLQFKLRQMHLDPMNDNVMESQAVYDHHHHQNIADYEAQMPFAFRVQPMQPNLQERF.

Residues 3 to 57 (RGKIEIKRIENSSNRQVTYSKRRNGIMKKAKEISVLCDAHVSVIIFASSGKMHEF) enclose the MADS-box domain. The 87-residue stretch at 84-170 (HEHLDNEINR…QFKLRQMHLD (87 aa)) folds into the K-box domain.

It is found in the nucleus. In terms of biological role, transcription factor involved in the genetic control of flower development. Acts in conjunction with DEFICIENS (defA). In Antirrhinum majus (Garden snapdragon), this protein is Floral homeotic protein GLOBOSA (GLO).